Reading from the N-terminus, the 85-residue chain is Alpha-toxin Amm8 (85 aa).

Residues 1–19 (MNYLVMISLALLFMTGVES) form the signal peptide. An LCN-type CS-alpha/beta domain is found at 21-83 (KDGYIVNDIN…VRTKGPGRCN (63 aa)). Intrachain disulfides connect Cys31/Cys82, Cys35/Cys55, Cys41/Cys65, and Cys45/Cys67. A propeptide (removed by a carboxypeptidase) is located at residue Arg85.

The protein belongs to the long (4 C-C) scorpion toxin superfamily. Sodium channel inhibitor family. Alpha subfamily. As to expression, expressed by the venom gland.

It is found in the secreted. Alpha toxins bind voltage-independently at site-3 of sodium channels (Nav) and inhibit the inactivation of the activated channels, thereby blocking neuronal transmission. The toxin principally slows the inactivation process of TTX-sensitive sodium channels. It discriminates neuronal versus muscular sodium channel, as it is more potent on rat brain Nav1.2/SCN2A (EC(50)=29 nM) than on rat skeletal muscle Nav1.4/SCN4A (EC(50)=416 nM). It also shows a weak activity on Nav1.7/SCN9A (EC(50)=1.76 uM). In vivo, the toxin produces pain hypersensibility to mechanical and thermal stimuli. It also exhibits potent analgesic activity (when injected intraperitoneally), increasing hot plate and tail flick withdrawal latencies in a dose-dependent fashion. This paradoxical analgesic action, is significantly suppressed by opioid receptor antagonists, suggesting a pain-induced analgesia mechanism that involves an endogenous opioid system. This led to hypothesis that pain relief induced by peripheral administration of Amm VIII may result from sensitization of primary afferent neurons and subsequent activation of an opioid-dependent noxious inhibitory control. This Androctonus mauritanicus mauritanicus (Scorpion) protein is Alpha-toxin Amm8.